The sequence spans 115 residues: Secapin (115 aa).

An N-terminal signal peptide occupies residues 1-24 (MRFQVYILHLCFFILVVLTYLSQG). The propeptide occupies 25–90 (QSYTTTTTTS…STENFDITNR (66 aa)). Residues C99 and C110 are joined by a disulfide bond.

Belongs to the secapin family. As to expression, expressed in the epidermis, fat body and venom gland.

It localises to the secreted. Serine protease inhibitor which exhibits antifibrinolytic, antielastolytic and antimicrobial activities. Displays antimicrobial activity against bacteria and fungi. Likely functions in the innate immune response to microbial infection and possibly in the venom, as an antifibrinolytic agent. The recombinant form inhibits trypsin (IC(50)=80.02 nM, Ki=127.25 nM), chymotrypsin (IC(50)=393.78 nM, Ki=432.59 nM), the microbial serine proteases subtilisin A (IC(50)=379.20 nM, Ki=492.77 nM) and proteinase K (IC(50)=189.43 nM, Ki=271.76 nM), plasmin (IC(50)=457.98 nM, Ki=502.91 nM), human elastase (IC(50)=347.81 nM, Ki=469.90 nM) and porcine elastase (IC(50)=94.70 nM, Ki=125.62 nM). Does not inhibit thrombin. Binds to human plasmin and inhibits the plasmin-mediated degradation of fibrin to fibrin degradation products, indicating its role as an anti-fibrinolytic agent. Also binds to bacterial and fungal surfaces. Exhibits antimicrobial activity against the Gram-positive bacteria B.thuringiensis (MIC=4.21 uM) and P.larvae (MIC=11.13 uM), the Gram-negative bacteria E.coli (MIC=6.50 uM) and the multidrug-resistant A.baumannii (MIC=5 ug/ml, MBC=10 ug/ml), as well as against the fungus B.bassiana (IC(50)=2.57 uM). The synthetic peptide also exhibits antimicrobial activity against the Gram-positive bacterium P.larvae (MIC=41.12 uM), the Gram-negative bacterium P.aeruginosa (MIC=65.75 uM), and the fungus B.bassiana (IC(50)=44.27 uM). Is also able to prevent A.baumannii biofilm formation and eliminate established A.baumannii biofilms. In vitro, does not induce an inflammatory response and has no cytotoxic activity against mammalian cells. In Apis cerana (Indian honeybee), this protein is Secapin.